Reading from the N-terminus, the 216-residue chain is Deoxyribose-phosphate aldolase (216 aa).

The active-site Proton donor/acceptor is the aspartate 89. Lysine 153 serves as the catalytic Schiff-base intermediate with acetaldehyde. The Proton donor/acceptor role is filled by lysine 182.

It belongs to the DeoC/FbaB aldolase family. DeoC type 1 subfamily.

Its subcellular location is the cytoplasm. It catalyses the reaction 2-deoxy-D-ribose 5-phosphate = D-glyceraldehyde 3-phosphate + acetaldehyde. Its pathway is carbohydrate degradation; 2-deoxy-D-ribose 1-phosphate degradation; D-glyceraldehyde 3-phosphate and acetaldehyde from 2-deoxy-alpha-D-ribose 1-phosphate: step 2/2. Functionally, catalyzes a reversible aldol reaction between acetaldehyde and D-glyceraldehyde 3-phosphate to generate 2-deoxy-D-ribose 5-phosphate. This Treponema denticola (strain ATCC 35405 / DSM 14222 / CIP 103919 / JCM 8153 / KCTC 15104) protein is Deoxyribose-phosphate aldolase.